A 313-amino-acid chain; its full sequence is Small ribosomal subunit protein uS2 (313 aa).

S2 is subject to N-acetylserine. Laminin-binding regions lie at residues 161-180 (IPCN…MLAR) and 205-229 (RDPE…EFQG). [DE]-W-[ST] repeat units lie at residues 230 to 232 (EWS) and 245 to 247 (DWS). Residues 242 to 313 (EVADWSEGVA…DWGGTTSDWS (72 aa)) form a laminin-binding region. A compositionally biased stretch (low complexity) spans 262–274 (PATAAAAAAAAPP). Positions 262-313 (PATAAAAAAAAPPVKTGEVFSEDWSTQPATDDWSTAPTAQASDWGGTTSDWS) are disordered. [DE]-W-[ST] repeat units lie at residues 284-286 (DWS), 293-295 (DWS), and 311-313 (DWS). Residues 284-313 (DWSTQPATDDWSTAPTAQASDWGGTTSDWS) show a composition bias toward polar residues.

Belongs to the universal ribosomal protein uS2 family. As to quaternary structure, monomer (37LRP) and homodimer (67LR). Component of the small ribosomal subunit. Mature ribosomes consist of a small (40S) and a large (60S) subunit. The 40S subunit contains about 33 different proteins and 1 molecule of RNA (18S). The 60S subunit contains about 49 different proteins and 3 molecules of RNA (28S, 5.8S and 5S). Interacts with rps21. Interacts with several laminins including at least lamb1. Interacts with mdk. In terms of processing, acylated. Acylation may be a prerequisite for conversion of the monomeric 37 kDa laminin receptor precursor (37LRP) to the mature dimeric 67 kDa laminin receptor (67LR), and may provide a mechanism for membrane association. Cleaved by stromelysin-3 (ST3) at the cell surface. Cleavage by stromelysin-3 may be a mechanism to alter cell-extracellular matrix interactions.

Its subcellular location is the cell membrane. It is found in the cytoplasm. The protein resides in the nucleus. Its function is as follows. Required for the assembly and/or stability of the 40S ribosomal subunit. Required for the processing of the 20S rRNA-precursor to mature 18S rRNA in a late step of the maturation of 40S ribosomal subunits. Also functions as a cell surface receptor for laminin. Plays a role in cell adhesion to the basement membrane and in the consequent activation of signaling transduction pathways. May play a role in cell fate determination and tissue morphogenesis. The polypeptide is Small ribosomal subunit protein uS2 (rpsa) (Solea senegalensis (Senegalese sole)).